Reading from the N-terminus, the 440-residue chain is Trigger factor (440 aa).

Residues 176-261 (GDKVVIDYQN…VKSIYVVKDV (86 aa)) form the PPIase FKBP-type domain.

Belongs to the FKBP-type PPIase family. Tig subfamily.

Its subcellular location is the cytoplasm. It catalyses the reaction [protein]-peptidylproline (omega=180) = [protein]-peptidylproline (omega=0). Its function is as follows. Involved in protein export. Acts as a chaperone by maintaining the newly synthesized protein in an open conformation. Functions as a peptidyl-prolyl cis-trans isomerase. In Ehrlichia canis (strain Jake), this protein is Trigger factor.